We begin with the raw amino-acid sequence, 96 residues long: Aspartyl/glutamyl-tRNA(Asn/Gln) amidotransferase subunit C (96 aa).

Belongs to the GatC family. In terms of assembly, heterotrimer of A, B and C subunits.

It carries out the reaction L-glutamyl-tRNA(Gln) + L-glutamine + ATP + H2O = L-glutaminyl-tRNA(Gln) + L-glutamate + ADP + phosphate + H(+). The enzyme catalyses L-aspartyl-tRNA(Asn) + L-glutamine + ATP + H2O = L-asparaginyl-tRNA(Asn) + L-glutamate + ADP + phosphate + 2 H(+). In terms of biological role, allows the formation of correctly charged Asn-tRNA(Asn) or Gln-tRNA(Gln) through the transamidation of misacylated Asp-tRNA(Asn) or Glu-tRNA(Gln) in organisms which lack either or both of asparaginyl-tRNA or glutaminyl-tRNA synthetases. The reaction takes place in the presence of glutamine and ATP through an activated phospho-Asp-tRNA(Asn) or phospho-Glu-tRNA(Gln). This is Aspartyl/glutamyl-tRNA(Asn/Gln) amidotransferase subunit C from Acaryochloris marina (strain MBIC 11017).